A 365-amino-acid polypeptide reads, in one-letter code: tRNA/tmRNA (uracil-C(5))-methyltransferase (365 aa).

Residues Gln189, Tyr217, Asn222, Glu238, and Asp298 each coordinate S-adenosyl-L-methionine. Catalysis depends on Cys323, which acts as the Nucleophile. Residue Glu357 is the Proton acceptor of the active site.

The protein belongs to the class I-like SAM-binding methyltransferase superfamily. RNA M5U methyltransferase family. TrmA subfamily.

The catalysed reaction is uridine(54) in tRNA + S-adenosyl-L-methionine = 5-methyluridine(54) in tRNA + S-adenosyl-L-homocysteine + H(+). The enzyme catalyses uridine(341) in tmRNA + S-adenosyl-L-methionine = 5-methyluridine(341) in tmRNA + S-adenosyl-L-homocysteine + H(+). Its function is as follows. Dual-specificity methyltransferase that catalyzes the formation of 5-methyluridine at position 54 (m5U54) in all tRNAs, and that of position 341 (m5U341) in tmRNA (transfer-mRNA). The polypeptide is tRNA/tmRNA (uracil-C(5))-methyltransferase (Shewanella sp. (strain MR-4)).